A 198-amino-acid chain; its full sequence is Protein hunchback (198 aa).

2 disordered regions span residues 16–116 (SHHH…NPMQ) and 158–198 (LTPP…KYMA). Over residues 17–31 (HHHHHHHAHHSHHQH) the composition is skewed to basic residues. Composition is skewed to low complexity over residues 35-46 (SNSNSNASSPHQ) and 68-83 (QQQQ…QQQQ). Over residues 95 to 105 (PSPSNNDQNSP) the composition is skewed to polar residues. A compositionally biased stretch (basic and acidic residues) spans 179 to 198 (EPEKEHDLMSNSSEDMKYMA).

It belongs to the hunchback C2H2-type zinc-finger protein family.

Its subcellular location is the nucleus. Gap class segmentation protein that controls development of head structures. The polypeptide is Protein hunchback (hb) (Drosophila cyrtoloma (Fruit fly)).